Consider the following 436-residue polypeptide: GTPase Der (436 aa).

2 consecutive EngA-type G domains span residues 3 to 168 (PLVA…EEKS) and 177 to 352 (IRLA…EQRS). Residues 9–16 (GRPNVGKS), 56–60 (DTGGY), 120–123 (NKVE), 183–190 (GRPNVGKS), 230–234 (DTAGL), and 295–298 (NKWD) contribute to the GTP site. The KH-like domain occupies 353 to 436 (QQITTSDLNR…VPFSLRFMQK (84 aa)).

The protein belongs to the TRAFAC class TrmE-Era-EngA-EngB-Septin-like GTPase superfamily. EngA (Der) GTPase family. As to quaternary structure, associates with the 50S ribosomal subunit.

In terms of biological role, GTPase that plays an essential role in the late steps of ribosome biogenesis. This is GTPase Der from Prosthecochloris aestuarii (strain DSM 271 / SK 413).